Here is a 147-residue protein sequence, read N- to C-terminus: Large ribosomal subunit protein uL23A (147 aa).

The segment covering 1–10 (MAPSAPAKTA) has biased composition (low complexity). The interval 1 to 29 (MAPSAPAKTAKALDAKKKVVKGKRTTHRR) is disordered. A compositionally biased stretch (basic residues) spans 18-29 (KVVKGKRTTHRR).

Belongs to the universal ribosomal protein uL23 family.

Functionally, this protein binds to a specific region on the 26S rRNA. This Caenorhabditis elegans protein is Large ribosomal subunit protein uL23A.